A 211-amino-acid chain; its full sequence is Protein DEHYDRATION-INDUCED 19 homolog 7 (211 aa).

At Thr-113 the chain carries Phosphothreonine. The disordered stretch occupies residues 163–194 (GDSVAQVSPKDTSKSKIQQESFSNEDQEKAKK). Over residues 167 to 186 (AQVSPKDTSKSKIQQESFSN) the composition is skewed to polar residues.

Belongs to the Di19 family. Not phosphorylated in vitro by CPK3 or CPK11. In terms of tissue distribution, expressed in seedlings, roots, leaves, stems, flowers and siliques.

Its subcellular location is the nucleus. Functionally, involved in both red and blue light signaling. The sequence is that of Protein DEHYDRATION-INDUCED 19 homolog 7 (DI19-7) from Arabidopsis thaliana (Mouse-ear cress).